The chain runs to 38 residues: Large ribosomal subunit protein bL36 (38 aa).

It belongs to the bacterial ribosomal protein bL36 family.

The chain is Large ribosomal subunit protein bL36 from Roseiflexus castenholzii (strain DSM 13941 / HLO8).